The following is a 175-amino-acid chain: Adenine phosphoribosyltransferase (175 aa).

Belongs to the purine/pyrimidine phosphoribosyltransferase family. As to quaternary structure, homodimer.

It localises to the cytoplasm. It catalyses the reaction AMP + diphosphate = 5-phospho-alpha-D-ribose 1-diphosphate + adenine. The protein operates within purine metabolism; AMP biosynthesis via salvage pathway; AMP from adenine: step 1/1. Its function is as follows. Catalyzes a salvage reaction resulting in the formation of AMP, that is energically less costly than de novo synthesis. In Francisella tularensis subsp. tularensis (strain FSC 198), this protein is Adenine phosphoribosyltransferase.